The sequence spans 398 residues: MASNDKGLEEIPDSQIESNYDEITDSFDSMELKPELLRGVYAYGFERPSAIQQRAILPIVKGNDVIAQAQSGTGKTATFSISALQKLDPNVKACQALIVAPTRELAQQIQKVVIAIGDFMNIQCHACIGGTAVRDDMNALREGPQIVVGTPGRIHDMIQRRVLKTDQMKMFILDEADEMLSRGFTEQIYDIFQLLPQSTQVVLLSATMPQDVLEVTTKFMRDPVRILVKKQELTLEGIKQFYIAVEKEEWKLDTLSDLYETVTITQAVIFCNTRRKVDWLTDKLTARDFTVSAMHGDMEQAQRDVIMKEFRSGSSRVLIATDLLARGIDVQQVSLVINYDLPANRENYIHRIGRGGRFGRKGVAINFVTADDVRMMREIEQFYSTQIEEMPMNVADLI.

The short motif at 25-53 (DSFDSMELKPELLRGVYAYGFERPSAIQQ) is the Q motif element. In terms of domain architecture, Helicase ATP-binding spans 56–226 (ILPIVKGNDV…TKFMRDPVRI (171 aa)). 69–76 (AQSGTGKT) lines the ATP pocket. Positions 174-177 (DEAD) match the DEAD box motif. The Helicase C-terminal domain maps to 237–398 (GIKQFYIAVE…EMPMNVADLI (162 aa)).

This sequence belongs to the DEAD box helicase family. eIF4A subfamily. As to quaternary structure, component of the eIF4F complex, which composition varies with external and internal environmental conditions. It is composed of at least eIF4A, eIF4E and eIF4G.

Its subcellular location is the cytoplasm. The enzyme catalyses ATP + H2O = ADP + phosphate + H(+). Its function is as follows. ATP-dependent RNA helicase which is a subunit of the eIF4F complex involved in cap recognition and is required for mRNA binding to ribosome. In the current model of translation initiation, eIF4A unwinds RNA secondary structures in the 5'-UTR of mRNAs which is necessary to allow efficient binding of the small ribosomal subunit, and subsequent scanning for the initiator codon. This chain is ATP-dependent RNA helicase eIF4A (tif1), found in Emericella nidulans (strain FGSC A4 / ATCC 38163 / CBS 112.46 / NRRL 194 / M139) (Aspergillus nidulans).